The primary structure comprises 290 residues: UPF0761 membrane protein YihY (290 aa).

6 helical membrane-spanning segments follow: residues 44–64 (LLSL…FPMF), 104–124 (VGAC…DSAL), 140–160 (FAVY…SLAI), 183–203 (ILPL…VPTT), 210–230 (ALVG…GFAL), and 244–264 (VLAV…IVLL).

The protein belongs to the UPF0761 family.

The protein localises to the cell inner membrane. This Salmonella paratyphi B (strain ATCC BAA-1250 / SPB7) protein is UPF0761 membrane protein YihY.